A 451-amino-acid chain; its full sequence is Probable asparagine--tRNA ligase, cytoplasmic (451 aa).

This sequence belongs to the class-II aminoacyl-tRNA synthetase family.

The protein resides in the cytoplasm. The enzyme catalyses tRNA(Asn) + L-asparagine + ATP = L-asparaginyl-tRNA(Asn) + AMP + diphosphate + H(+). This Encephalitozoon cuniculi (strain GB-M1) (Microsporidian parasite) protein is Probable asparagine--tRNA ligase, cytoplasmic.